The chain runs to 1240 residues: DNA-directed RNA polymerase subunit beta (1240 aa).

It belongs to the RNA polymerase beta chain family. As to quaternary structure, the RNAP catalytic core consists of 2 alpha, 1 beta, 1 beta' and 1 omega subunit. When a sigma factor is associated with the core the holoenzyme is formed, which can initiate transcription.

The catalysed reaction is RNA(n) + a ribonucleoside 5'-triphosphate = RNA(n+1) + diphosphate. Its function is as follows. DNA-dependent RNA polymerase catalyzes the transcription of DNA into RNA using the four ribonucleoside triphosphates as substrates. The chain is DNA-directed RNA polymerase subunit beta from Rhodopirellula baltica (strain DSM 10527 / NCIMB 13988 / SH1).